Reading from the N-terminus, the 389-residue chain is Chitin-binding protein CbpD (389 aa).

Residues methionine 1–alanine 25 form the signal peptide. Positions histidine 26–serine 208 constitute a Chitin-binding type-4 domain.

Can be detected in the extracellular supernatant as a 43 kDa protein and a 23 kDa protein, both proteins have the same N-terminus. Only the larger protein binds chitin, which may protect it from further processing and/or degradation by elastase (lasB). It is not clear whether the short form is functional or a degradation product.

The protein resides in the secreted. In terms of biological role, binds chitin but does not hydrolyze it, has no detectable protease or staphylolytic activity. The sequence is that of Chitin-binding protein CbpD from Pseudomonas aeruginosa (strain ATCC 15692 / DSM 22644 / CIP 104116 / JCM 14847 / LMG 12228 / 1C / PRS 101 / PAO1).